A 657-amino-acid polypeptide reads, in one-letter code: Macrolide export ATP-binding/permease protein MacB (657 aa).

The region spanning 5–242 (LELLDVHRTY…RAVTGESAFD (238 aa)) is the ABC transporter domain. 41 to 48 (GASGSGKS) is an ATP binding site. 4 helical membrane-spanning segments follow: residues 276 to 296 (FLSV…MALG), 538 to 558 (IAAI…LVSV), 596 to 616 (IGVF…GWAV), and 620 to 640 (LLSV…FGLW).

This sequence belongs to the ABC transporter superfamily. Macrolide exporter (TC 3.A.1.122) family. In terms of assembly, homodimer.

The protein resides in the cell inner membrane. In terms of biological role, non-canonical ABC transporter that contains transmembrane domains (TMD), which form a pore in the inner membrane, and an ATP-binding domain (NBD), which is responsible for energy generation. Confers resistance against macrolides. The chain is Macrolide export ATP-binding/permease protein MacB from Chlorobium phaeobacteroides (strain DSM 266 / SMG 266 / 2430).